We begin with the raw amino-acid sequence, 275 residues long: Undecaprenyl-diphosphatase (275 aa).

The next 7 helical transmembrane spans lie at 8 to 28 (WTIV…PIPI), 45 to 65 (ARGL…VLII), 92 to 112 (FMFV…GVLF), 119 to 139 (FIGE…AAAI), 197 to 217 (FSFL…IPNI), 225 to 245 (ELWI…YFAL), and 255 to 275 (GNLK…LIFL).

The protein belongs to the UppP family.

It is found in the cell membrane. The catalysed reaction is di-trans,octa-cis-undecaprenyl diphosphate + H2O = di-trans,octa-cis-undecaprenyl phosphate + phosphate + H(+). In terms of biological role, catalyzes the dephosphorylation of undecaprenyl diphosphate (UPP). Confers resistance to bacitracin. In Oceanobacillus iheyensis (strain DSM 14371 / CIP 107618 / JCM 11309 / KCTC 3954 / HTE831), this protein is Undecaprenyl-diphosphatase.